A 557-amino-acid polypeptide reads, in one-letter code: Mercuric reductase (557 aa).

The region spanning 1–65 (MILLSIEGMT…AIEALGYIAK (65 aa)) is the HMA domain. A metal cation-binding residues include cysteine 11 and cysteine 14. Residues alanine 106 and alanine 126 each contribute to the FAD site. Cysteines 133 and 138 form a disulfide. Residues lysine 142, alanine 207, aspartate 399, and valine 407 each contribute to the FAD site. Hg(2+)-binding residues include cysteine 554 and cysteine 555.

This sequence belongs to the class-I pyridine nucleotide-disulfide oxidoreductase family. Homodimer. It depends on FAD as a cofactor.

It catalyses the reaction Hg + NADP(+) + H(+) = Hg(2+) + NADPH. Its function is as follows. Resistance to Hg(2+) in bacteria appears to be governed by a specialized system which includes mercuric reductase. MerA protein is responsible for volatilizing mercury as Hg(0). The protein is Mercuric reductase (merA) of Shewanella putrefaciens (Pseudomonas putrefaciens).